Reading from the N-terminus, the 329-residue chain is DNA-directed RNA polymerase subunit alpha (329 aa).

The segment at 1-235 (MQGSVTEFLK…EQLEAFVDLR (235 aa)) is alpha N-terminal domain (alpha-NTD). The segment at 249–329 (FDPILLRPVD…NWPPASIADE (81 aa)) is alpha C-terminal domain (alpha-CTD).

It belongs to the RNA polymerase alpha chain family. As to quaternary structure, homodimer. The RNAP catalytic core consists of 2 alpha, 1 beta, 1 beta' and 1 omega subunit. When a sigma factor is associated with the core the holoenzyme is formed, which can initiate transcription.

The enzyme catalyses RNA(n) + a ribonucleoside 5'-triphosphate = RNA(n+1) + diphosphate. DNA-dependent RNA polymerase catalyzes the transcription of DNA into RNA using the four ribonucleoside triphosphates as substrates. This Sodalis glossinidius (strain morsitans) protein is DNA-directed RNA polymerase subunit alpha.